A 1942-amino-acid chain; its full sequence is Probable helicase with zinc finger domain (1942 aa).

The C3H1-type zinc-finger motif lies at 178–206 (SEEYTLCKRFLEQGICRYGAQCTSAHSQE). Phosphoserine is present on serine 248. Residue 668–675 (GPYGTGKT) coordinates ATP. Residues 794-797 (DEAA) carry the DEAA box motif. The segment covering 1117-1127 (SGSTNKQQQSP) has biased composition (polar residues). The segment at 1117-1141 (SGSTNKQQQSPPKGKSLHHTQNDHF) is disordered. Threonine 1163 is subject to Phosphothreonine. Arginine 1245 carries the post-translational modification Omega-N-methylarginine. Disordered regions lie at residues 1246-1345 (GSPI…INLP), 1386-1429 (NLPE…GPNN), 1527-1552 (QGSA…GLHQ), and 1608-1637 (RQVQ…FNDN). Composition is skewed to basic and acidic residues over residues 1268–1281 (HQEK…RNGK) and 1292–1308 (NKIR…KQVD). Positions 1399–1412 (NQVVQQQSQLNQQP) are enriched in low complexity. Phosphoserine is present on serine 1614. A compositionally biased stretch (low complexity) spans 1623–1636 (SSTDHSSHFSNFND). Phosphoserine is present on residues serine 1645, serine 1738, serine 1741, and serine 1766. 3 disordered regions span residues 1729-1779 (FHPL…TPQD), 1792-1843 (NQSS…PEDQ), and 1870-1942 (MPNK…SYFK). The segment covering 1731–1745 (PLSSRTVSSSSLPSL) has biased composition (low complexity). Polar residues-rich tracts occupy residues 1761–1779 (RISS…TPQD) and 1792–1825 (NQSS…SRTA). Composition is skewed to low complexity over residues 1876–1888 (AESA…QSSA) and 1920–1942 (LSLF…SYFK).

This sequence belongs to the DNA2/NAM7 helicase family. As to quaternary structure, interacts with SMYD2. Interacts with POLR2A. Interacts with SMYD3; the interaction may bridge SMYD3 and RNA polymerase II. As to expression, expressed predominantly in thymus and brain. Expression is down-regulated in 28 of 95 tested cancer cell lines.

It is found in the nucleus. Its function is as follows. May act as a helicase that plays a role in RNA metabolism in multiple tissues and organs within the developing embryo. The protein is Probable helicase with zinc finger domain (HELZ) of Homo sapiens (Human).